We begin with the raw amino-acid sequence, 267 residues long: DNA damage-regulated autophagy modulator protein 2 (267 aa).

The next 6 helical transmembrane spans lie at 8 to 28 (LSFL…FSYI), 53 to 73 (RCLF…TMYV), 87 to 107 (LIIK…LGLS), 118 to 138 (FIVH…YMFV), 160 to 180 (LLLV…SSIL), and 203 to 223 (VLHL…FGFF).

The protein belongs to the DRAM/TMEM150 family. As to expression, expressed in the retina.

It is found in the lysosome membrane. Its subcellular location is the photoreceptor inner segment. The protein localises to the apical cell membrane. In terms of biological role, plays a role in the initiation of autophagy. In the retina, might be involved in the process of photoreceptor cells renewal and recycling to preserve visual function. Induces apoptotic cell death when coexpressed with DRAM1. The chain is DNA damage-regulated autophagy modulator protein 2 (Dram2) from Mus musculus (Mouse).